The chain runs to 411 residues: UPF0597 protein Fnod_1278 (411 aa).

Belongs to the UPF0597 family.

In Fervidobacterium nodosum (strain ATCC 35602 / DSM 5306 / Rt17-B1), this protein is UPF0597 protein Fnod_1278.